The primary structure comprises 143 residues: Transcriptional regulator MraZ (143 aa).

SpoVT-AbrB domains lie at 5–47 and 76–119; these read EYNH…SMDE and ATEC…SSDQ.

Belongs to the MraZ family. In terms of assembly, forms oligomers.

Its subcellular location is the cytoplasm. It localises to the nucleoid. The polypeptide is Transcriptional regulator MraZ (Alkaliphilus metalliredigens (strain QYMF)).